The following is a 257-amino-acid chain: Small ribosomal subunit protein uS2 (257 aa).

Positions 229-257 (QFTPATTSSQEVDKASEQVEIAADDIDEE) are disordered.

This sequence belongs to the universal ribosomal protein uS2 family.

The chain is Small ribosomal subunit protein uS2 from Caldicellulosiruptor bescii (strain ATCC BAA-1888 / DSM 6725 / KCTC 15123 / Z-1320) (Anaerocellum thermophilum).